Reading from the N-terminus, the 359-residue chain is 4-galactosyl-N-acetylglucosaminide 3-alpha-L-fucosyltransferase FUT6 (359 aa).

The Cytoplasmic segment spans residues 1–14 (MDPLGPAKPQWSWR). The helical; Signal-anchor for type II membrane protein transmembrane segment at 15–34 (CCLTTLLFQLLVAVCFFSYL) threads the bilayer. At 35-359 (RVSRDDPTVY…QTRSIAAWFT (325 aa)) the chain is on the lumenal side. Residues asparagine 46, asparagine 91, asparagine 153, and asparagine 184 are each glycosylated (N-linked (GlcNAc...) asparagine). A determines site-specific fucosylation region spans residues 73–112 (KPIALPRCSEMVPGTADCNITADRKVYPQADAVIVHHREV).

The protein belongs to the glycosyltransferase 10 family. As to quaternary structure, homodimer and monomer. Monomer (secreted form). N-glycosylated. In terms of processing, proteolytic cleavage releases a secreted glycoform of 43 kDa.

It localises to the golgi apparatus. It is found in the golgi stack membrane. The protein resides in the secreted. It carries out the reaction a beta-D-galactosyl-(1-&gt;4)-N-acetyl-beta-D-glucosaminyl derivative + GDP-beta-L-fucose = a beta-D-galactosyl-(1-&gt;4)-[alpha-L-fucosyl-(1-&gt;3)]-N-acetyl-beta-D-glucosaminyl derivative + GDP + H(+). It catalyses the reaction an N-acetyl-alpha-neuraminyl-(2-&gt;3)-beta-D-galactosyl-(1-&gt;4)-N-acetyl-beta-D-glucosaminyl derivative + GDP-beta-L-fucose = an alpha-Neu5Ac-(2-&gt;3)-beta-D-Gal-(1-&gt;4)-[alpha-L-Fuc-(1-&gt;3)]-beta-D-GlcNAc derivative + GDP + H(+). The enzyme catalyses an alpha-Neu5Ac-(2-&gt;3)-beta-D-Gal-(1-&gt;4)-beta-D-GlcNAc-(1-&gt;3)-beta-D-Gal-(1-&gt;4)-[alpha-L-Fuc-(1-&gt;3)]-beta-D-GlcNAc derivative + GDP-beta-L-fucose = an alpha-Neu5Ac-(2-&gt;3)-beta-D-Gal-(1-&gt;4)-[alpha-L-Fuc-(1-&gt;3)]-beta-D-GlcNAc-(1-&gt;3)-beta-D-Gal-(1-&gt;4)-[alpha-L-Fuc-(1-&gt;3)]-beta-D-GlcNAc derivative + GDP + H(+). The catalysed reaction is a neolactoside nLc6Cer + GDP-beta-L-fucose = beta-D-Gal-(1-&gt;4)-[alpha-L-Fuc-(1-&gt;3)]-beta-D-GlcNAc-(1-&gt;3)-beta-D-Gal-(1-&gt;4)-beta-D-GlcNAc-(1-&gt;3)-beta-D-Gal-(1-&gt;4)-beta-D-Glc-(1&lt;-&gt;1')-Cer + GDP + H(+). It carries out the reaction a neolactoside nLc6Cer + GDP-beta-L-fucose = beta-D-galactosyl-(1-&gt;4)-N-acetyl-beta-D-glucosaminyl-(1-&gt;3)-beta-D-galactosyl-(1-&gt;4)-[alpha-L-fucosyl-(1-&gt;3)]-N-acetyl-beta-D-glucosaminyl-(1-&gt;3)-beta-D-galactosyl-(1-&gt;4)-beta-D-glucosyl-(1&lt;-&gt;1')-ceramide + GDP + H(+). It catalyses the reaction a neolactoside VI(3)-alpha-NeuNAc-nLc6Cer + GDP-beta-L-fucose = a neolactoside VI(3)-alpha-NeuAc,V(3)-alphaFuc-nLc6Cer + GDP + H(+). The enzyme catalyses beta-D-galactosyl-(1-&gt;4)-N-acetyl-D-glucosamine + GDP-beta-L-fucose = beta-D-galactosyl-(1-&gt;4)-[alpha-L-fucosyl-(1-&gt;3)]-N-acetyl-D-glucosamine + GDP + H(+). The catalysed reaction is N-acetyl-alpha-neuraminosyl-(2-&gt;3)-beta-D-galactosyl-(1-&gt;4)-N-acetyl-beta-D-glucosamine + GDP-beta-L-fucose = N-acetyl-alpha-neuraminosyl-(2-&gt;3)-beta-D-galactosyl-(1-&gt;4)-[alpha-L-fucosyl-(1-&gt;3)]-N-acetyl-beta-D-glucosamine + GDP + H(+). It carries out the reaction lactose + GDP-beta-L-fucose = beta-D-galactosyl-(1-&gt;4)-[alpha-L-fucosyl-(1-&gt;3)]-D-glucose + GDP + H(+). It catalyses the reaction alpha-L-Fuc-(1-&gt;2)-beta-D-Gal-(1-&gt;4)-D-Glc + GDP-beta-L-fucose = alpha-L-Fuc-(1-&gt;2)-beta-D-Gal-(1-&gt;4)-[alpha-L-Fuc-(1-&gt;3)]-D-Glc + GDP + H(+). The enzyme catalyses a beta-D-galactosyl-(1-&gt;4)-N-acetyl-beta-D-6-sulfooxy-glucosaminyl derivative + GDP-beta-L-fucose = a beta-D-galactosyl-(1-&gt;4)-[alpha-L-fucosyl-(1-&gt;3)]-N-acetyl-beta-D-6-sulfooxy-glucosaminyl derivative + GDP + H(+). The protein operates within protein modification; protein glycosylation. Functionally, catalyzes the transfer of L-fucose, from a guanosine diphosphate-beta-L-fucose, to the N-acetyl glucosamine (GlcNAc) of a distal alpha2,3 sialylated lactosamine unit of a glycoprotein- or glycolipid-linked sialopolylactosamines chain or of a distal or internal lactosamine unit of a neutral glycoprotein- or glycolipid-linked polylactosamines chain through an alpha-1,3 glycosidic linkage and participates in surface expression of the sialyl Lewis X (sLe(x)), Lewis X (Le(x)) and non sialylated VIM2 determinants. Moreover transfers fucose to H-type 2 (Fucalpha1-2Galbeta1-4GlcNAc) chain acceptor substrates and participates in difucosylated sialyl Lewis x determinants. Also fucosylates a polylactosamine substrate having a 6 sulfate modification at the GlcNAc moiety and gives rise to sialyl and non-sialyl 6-sulfo lewis X. Does not have activity towards type 1 ((Galbeta1-3GlcNAc)) and H-type 1 chain (Fucalpha1-2Galbeta1-3GlcNAc) acceptors substrates. The chain is 4-galactosyl-N-acetylglucosaminide 3-alpha-L-fucosyltransferase FUT6 from Pan troglodytes (Chimpanzee).